Reading from the N-terminus, the 83-residue chain is Short neurotoxin NCA-02/NCA-05/UER-05 (83 aa).

Positions 1-21 (MKTLLLTLVVVTMVCLDLGYT) are cleaved as a signal peptide. 4 disulfides stabilise this stretch: C24/C45, C38/C62, C64/C75, and C76/C81.

This sequence belongs to the three-finger toxin family. Short-chain subfamily. Type I alpha-neurotoxin sub-subfamily. Expressed by the venom gland.

The protein localises to the secreted. Binds to muscle nicotinic acetylcholine receptor (nAChR) and inhibit acetylcholine from binding to the receptor, thereby impairing neuromuscular transmission. The chain is Short neurotoxin NCA-02/NCA-05/UER-05 from Laticauda colubrina (Yellow-lipped sea krait).